Reading from the N-terminus, the 60-residue chain is Large ribosomal subunit protein eL37 (60 aa).

The Zn(2+) site is built by Cys-18, Cys-21, Cys-33, and Cys-36. The segment at 18-36 (CRRCGKNSYHVRKKVCAAC) adopts a C4-type zinc-finger fold.

Belongs to the eukaryotic ribosomal protein eL37 family. Zn(2+) is required as a cofactor.

Functionally, binds to the 23S rRNA. In Methanothermobacter thermautotrophicus (strain ATCC 29096 / DSM 1053 / JCM 10044 / NBRC 100330 / Delta H) (Methanobacterium thermoautotrophicum), this protein is Large ribosomal subunit protein eL37 (rpl37e).